Reading from the N-terminus, the 276-residue chain is Large ribosomal subunit protein uL2 (276 aa).

Positions 224 to 276 are disordered; that stretch reads VMNPVDHPHGGGEGKAPIGRKSPMTPWGKPTLGYKTRKKKNKSDKFIIRRRKK. Basic residues predominate over residues 258 to 276; that stretch reads KTRKKKNKSDKFIIRRRKK.

The protein belongs to the universal ribosomal protein uL2 family. Part of the 50S ribosomal subunit. Forms a bridge to the 30S subunit in the 70S ribosome.

One of the primary rRNA binding proteins. Required for association of the 30S and 50S subunits to form the 70S ribosome, for tRNA binding and peptide bond formation. It has been suggested to have peptidyltransferase activity; this is somewhat controversial. Makes several contacts with the 16S rRNA in the 70S ribosome. The polypeptide is Large ribosomal subunit protein uL2 (Geobacillus stearothermophilus (Bacillus stearothermophilus)).